Here is a 429-residue protein sequence, read N- to C-terminus: Formate-dependent phosphoribosylglycinamide formyltransferase (429 aa).

N(1)-(5-phospho-beta-D-ribosyl)glycinamide is bound by residues Glu-26–Leu-27 and Glu-86. Residues Arg-118, Lys-159, Glu-199–Ile-202, and Glu-207 each bind ATP. Residues Glu-123–Leu-319 enclose the ATP-grasp domain. Residues Glu-276 and Glu-288 each coordinate Mg(2+). N(1)-(5-phospho-beta-D-ribosyl)glycinamide-binding positions include Asp-295, Lys-375, and Arg-382–Arg-383.

The protein belongs to the PurK/PurT family. In terms of assembly, homodimer.

The enzyme catalyses N(1)-(5-phospho-beta-D-ribosyl)glycinamide + formate + ATP = N(2)-formyl-N(1)-(5-phospho-beta-D-ribosyl)glycinamide + ADP + phosphate + H(+). It participates in purine metabolism; IMP biosynthesis via de novo pathway; N(2)-formyl-N(1)-(5-phospho-D-ribosyl)glycinamide from N(1)-(5-phospho-D-ribosyl)glycinamide (formate route): step 1/1. Functionally, involved in the de novo purine biosynthesis. Catalyzes the transfer of formate to 5-phospho-ribosyl-glycinamide (GAR), producing 5-phospho-ribosyl-N-formylglycinamide (FGAR). Formate is provided by PurU via hydrolysis of 10-formyl-tetrahydrofolate. This Pyrococcus furiosus (strain ATCC 43587 / DSM 3638 / JCM 8422 / Vc1) protein is Formate-dependent phosphoribosylglycinamide formyltransferase.